The primary structure comprises 273 residues: Protein PERCC1 (273 aa).

Disordered stretches follow at residues 18 to 84 (SHES…PETP) and 253 to 273 (GGSELQSGGTQGLEGTQLAEV). The span at 28-56 (EAPEISEEEEEEEEEEEEEEEEEEVDQDQ) shows a compositional bias: acidic residues. Polar residues predominate over residues 67–83 (DSQSSGVVPQDPSSPET).

As to expression, specifically expressed in the stomach, pancreas and intestine. In gastrointestinal tissue, expression is primarily restricted to gastric G cells and duodenal enteroendocrine cells (EECs).

Its function is as follows. Plays a critical role in intestinal function by promoting the development of enteroendocrine cells (EECs) of the gastrointestinal tract and pancreas. It is thereby required for normal enteroendocrine peptide hormone secretion. This is Protein PERCC1 from Mus musculus (Mouse).